The sequence spans 939 residues: Translation initiation factor IF-2 (939 aa).

The segment covering 81-94 (EEQSRKAYEKEQQL) has biased composition (basic and acidic residues). 2 disordered regions span residues 81–303 (EEQS…KKVE) and 316–337 (TISGMDDSGSSGSRQKFRKMRR). Positions 99–108 (SSAPSPAPAA) are enriched in low complexity. Composition is skewed to basic and acidic residues over residues 112-127 (EPVKEPFVEIPARHEP) and 148-173 (SPKEEVVATKAPEAEAKPVEQPEKAA). Residues 178–189 (EAQPEAQSQQEP) show a composition bias toward low complexity. The segment covering 244–255 (FKENAAELKDEF) has biased composition (basic and acidic residues). Residues 276–287 (AAGEGESTTGGE) are compositionally biased toward low complexity. Residues 292-301 (KKKKGKKKKK) are compositionally biased toward basic residues. Residues 318 to 328 (SGMDDSGSSGS) are compositionally biased toward low complexity. Residues 436–606 (TRPPVVTIMG…LTEAEVRELK (171 aa)) enclose the tr-type G domain. Positions 445–452 (GHVDHGKT) are G1. Position 445-452 (445-452 (GHVDHGKT)) interacts with GTP. A G2 region spans residues 470-474 (GITQH). The tract at residues 492–495 (DTPG) is G3. GTP is bound by residues 492–496 (DTPGH) and 546–549 (NKID). Positions 546 to 549 (NKID) are G4. The interval 582 to 584 (SAK) is G5.

It belongs to the TRAFAC class translation factor GTPase superfamily. Classic translation factor GTPase family. IF-2 subfamily.

The protein localises to the cytoplasm. In terms of biological role, one of the essential components for the initiation of protein synthesis. Protects formylmethionyl-tRNA from spontaneous hydrolysis and promotes its binding to the 30S ribosomal subunits. Also involved in the hydrolysis of GTP during the formation of the 70S ribosomal complex. This is Translation initiation factor IF-2 from Chlorobaculum parvum (strain DSM 263 / NCIMB 8327) (Chlorobium vibrioforme subsp. thiosulfatophilum).